The following is a 260-amino-acid chain: MVLIRVLANLLILQLSYAQKSSELIIGGDECNINEHRFLVALYTFRSRRFHCSGTLINQEWVLSAARCDRKNIRIKLGMHSTNVTNEDVQTRVPKEKFFCLSSKTYTKWNKDIMLIRLKRPVNNSTHIAPVSLPSNPPSLGSVCRVMGWGTISATKETHPDVPHCANINILDYSVCRAAYARLPATSRTLCAGILEGGKDTCHGDSGGPLICNGQVQGIVSWGGHPCGLPRKPGLYTKVFDHLDWIKSIIAGNKDATCPP.

The signal sequence occupies residues 1–18 (MVLIRVLANLLILQLSYA). A propeptide spanning residues 19–24 (QKSSEL) is cleaved from the precursor. The Peptidase S1 domain occupies 25–251 (IIGGDECNIN…HLDWIKSIIA (227 aa)). 6 cysteine pairs are disulfide-bonded: C31/C165, C52/C68, C100/C258, C144/C212, C176/C191, and C202/C227. N-linked (GlcNAc...) asparagine glycans are attached at residues N83, N123, and N124.

Belongs to the peptidase S1 family. Snake venom subfamily. As to expression, expressed by the venom gland.

The protein localises to the secreted. Snake venom serine protease homolog that may act in the hemostasis system of the prey. The polypeptide is Snake venom serine protease homolog 1 (Trimeresurus stejnegeri (Chinese green tree viper)).